A 219-amino-acid chain; its full sequence is Ion-translocating oxidoreductase complex subunit G (219 aa).

A helical membrane pass occupies residues 25 to 45; that stretch reads GLLLGLFSLVSALMLALASDA. The residue at position 187 (T187) is an FMN phosphoryl threonine.

The protein belongs to the RnfG family. As to quaternary structure, the complex is composed of six subunits: RnfA, RnfB, RnfC, RnfD, RnfE and RnfG. It depends on FMN as a cofactor.

The protein resides in the cellular chromatophore membrane. Functionally, part of a membrane-bound complex that couples electron transfer with translocation of ions across the membrane. The protein is Ion-translocating oxidoreductase complex subunit G of Cereibacter sphaeroides (strain ATCC 17023 / DSM 158 / JCM 6121 / CCUG 31486 / LMG 2827 / NBRC 12203 / NCIMB 8253 / ATH 2.4.1.) (Rhodobacter sphaeroides).